Consider the following 402-residue polypeptide: Phosphoglycerate kinase (402 aa).

Substrate-binding positions include 24 to 26 (DFN), Arg40, 63 to 66 (HFGR), Arg122, and Arg155. ATP contacts are provided by residues Lys206, Gly297, Glu328, and 357–360 (GGDS).

Belongs to the phosphoglycerate kinase family. As to quaternary structure, monomer.

The protein resides in the cytoplasm. It carries out the reaction (2R)-3-phosphoglycerate + ATP = (2R)-3-phospho-glyceroyl phosphate + ADP. It participates in carbohydrate degradation; glycolysis; pyruvate from D-glyceraldehyde 3-phosphate: step 2/5. In Synechococcus sp. (strain RCC307), this protein is Phosphoglycerate kinase.